The chain runs to 270 residues: Putative phosphoenolpyruvate synthase regulatory protein (270 aa).

An ADP-binding site is contributed by 154 to 161; sequence GVSRAGKT.

It belongs to the pyruvate, phosphate/water dikinase regulatory protein family. PSRP subfamily.

It carries out the reaction [pyruvate, water dikinase] + ADP = [pyruvate, water dikinase]-phosphate + AMP + H(+). The enzyme catalyses [pyruvate, water dikinase]-phosphate + phosphate + H(+) = [pyruvate, water dikinase] + diphosphate. Functionally, bifunctional serine/threonine kinase and phosphorylase involved in the regulation of the phosphoenolpyruvate synthase (PEPS) by catalyzing its phosphorylation/dephosphorylation. In Deinococcus geothermalis (strain DSM 11300 / CIP 105573 / AG-3a), this protein is Putative phosphoenolpyruvate synthase regulatory protein.